An 87-amino-acid chain; its full sequence is Acyl-CoA-binding protein 2 (87 aa).

The ACB domain maps to 2 to 87; the sequence is VSQLFEEKAK…VDNLIAKYSS (86 aa). An acyl-CoA is bound by residues 29-33, lysine 51, lysine 55, and tyrosine 74; that span reads YGLYK.

It belongs to the ACBP family.

In terms of biological role, binds medium- and long-chain acyl-CoA esters with very high affinity and may function as an intracellular carrier of acyl-CoA esters. The sequence is that of Acyl-CoA-binding protein 2 (ACB2) from Saccharomyces pastorianus (strain ATCC 76670 / Carlsberg bottom yeast no.2 / CBS 1503 / CLIB 180 / NBRC 10610 / NRRL Y-1525) (Saaz-type lager yeast).